A 480-amino-acid polypeptide reads, in one-letter code: Endothelial transcription factor GATA-2 (480 aa).

Ser-73 is subject to Phosphoserine. Position 86 is an asymmetric dimethylarginine (Arg-86). The segment at 119–209 is disordered; sequence SPFSKTPLHP…GSAARGEDKD (91 aa). Gly residues predominate over residues 143 to 153; that stretch reads GAGGGSGGGSG. The span at 185–203 shows a compositional bias: low complexity; that stretch reads PSTTGAASPASSSAGGSAA. Ser-192 is modified (phosphoserine). 2 GATA-type zinc fingers span residues 295-319 and 349-373; these read CVNC…CNAC and CANC…CNAC. Lys-389 is covalently cross-linked (Glycyl lysine isopeptide (Lys-Gly) (interchain with G-Cter in SUMO2)). The segment at 448–480 is disordered; that stretch reads HSGHILPTPTPIHPSSSLSFGHPHPSSMVTAMG.

Interacts with BRD3. Interacts with AR and CCAR1. Interacts with MDFIC. As to expression, endothelial cells.

It localises to the nucleus. Its function is as follows. Transcriptional activator which regulates endothelin-1 gene expression in endothelial cells. Binds to the consensus sequence 5'-AGATAG-3'. This chain is Endothelial transcription factor GATA-2 (GATA2), found in Homo sapiens (Human).